The primary structure comprises 338 residues: MENLDALVSQALEAVQHAEDINALEQIRVHFLGKKGELTQVMKTLGNLPAEERPQVGALINVAKERVTEVLNARKAAFEEAELSAKLAAECIDVTLPGRGQTSGGLHPITRTLERIEQFFTHIGYGIAEGPEVEDDYHNFEALNIPGHHPARSMHDTFYFNANMLLRTHTSPVQVRTMESQQPPIRIVCPGRVYRSDSDITHSPMFHQVEGLLVDRDINFADLKGTIEEFLRVFFEKELAVRFRPSYFPFTEPSAEVDMECVMCSGKGCRVCKQTGWLEVMGCGMVHPNVLRMSGIDPEEFQGFAFGMGAERLAMLRYGVNDLRLFFDNDLRFLAQFR.

Glu252 contributes to the Mg(2+) binding site.

The protein belongs to the class-II aminoacyl-tRNA synthetase family. Phe-tRNA synthetase alpha subunit type 1 subfamily. Tetramer of two alpha and two beta subunits. It depends on Mg(2+) as a cofactor.

It is found in the cytoplasm. The catalysed reaction is tRNA(Phe) + L-phenylalanine + ATP = L-phenylalanyl-tRNA(Phe) + AMP + diphosphate + H(+). This is Phenylalanine--tRNA ligase alpha subunit from Pseudomonas fluorescens (strain ATCC BAA-477 / NRRL B-23932 / Pf-5).